Reading from the N-terminus, the 282-residue chain is Protein N-terminal and lysine N-methyltransferase efm7 (282 aa).

Residues 1–13 (MSKPEEVVNHVPE) show a composition bias toward basic and acidic residues. The interval 1–32 (MSKPEEVVNHVPEDEGSDIEAGGLFEDPPDFY) is disordered. S-adenosyl-L-methionine is bound by residues W67, 93–95 (GAA), D115, W152, and A179.

Belongs to the class I-like SAM-binding methyltransferase superfamily. EFM7 family.

The protein localises to the cytoplasm. Functionally, S-adenosyl-L-methionine-dependent protein methyltransferase that trimethylates the N-terminal glycine 'Gly-2' of elongation factor 1-alpha, before also catalyzing the mono- and dimethylation of 'Lys-3'. This is Protein N-terminal and lysine N-methyltransferase efm7 (nnt-1) from Neurospora crassa (strain ATCC 24698 / 74-OR23-1A / CBS 708.71 / DSM 1257 / FGSC 987).